The primary structure comprises 527 residues: 2-isopropylmalate synthase (527 aa).

The 263-residue stretch at 18–280 (IRIFDTTLRD…QTNINSKRLV (263 aa)) folds into the Pyruvate carboxyltransferase domain. Mn(2+) contacts are provided by D27, H215, H217, and N251. Positions 405 to 527 (TLVDYEVTSG…ASDPGELPQP (123 aa)) are regulatory domain.

The protein belongs to the alpha-IPM synthase/homocitrate synthase family. LeuA type 1 subfamily. In terms of assembly, homodimer. Mn(2+) is required as a cofactor.

The protein resides in the cytoplasm. The enzyme catalyses 3-methyl-2-oxobutanoate + acetyl-CoA + H2O = (2S)-2-isopropylmalate + CoA + H(+). It functions in the pathway amino-acid biosynthesis; L-leucine biosynthesis; L-leucine from 3-methyl-2-oxobutanoate: step 1/4. Its function is as follows. Catalyzes the condensation of the acetyl group of acetyl-CoA with 3-methyl-2-oxobutanoate (2-ketoisovalerate) to form 3-carboxy-3-hydroxy-4-methylpentanoate (2-isopropylmalate). This chain is 2-isopropylmalate synthase, found in Rhodopirellula baltica (strain DSM 10527 / NCIMB 13988 / SH1).